The primary structure comprises 339 residues: 7,8-didemethyl-8-hydroxy-5-deazariboflavin synthase (339 aa).

The region spanning 13–258 (ITYSKNIFIP…RDTDVSIQVP (246 aa)) is the Radical SAM core domain. The [4Fe-4S] cluster site is built by cysteine 27, cysteine 31, and cysteine 34.

This sequence belongs to the radical SAM superfamily. CofG family. Consists of two subunits, CofG and CofH. It depends on [4Fe-4S] cluster as a cofactor.

It catalyses the reaction 5-amino-5-(4-hydroxybenzyl)-6-(D-ribitylimino)-5,6-dihydrouracil + S-adenosyl-L-methionine = 7,8-didemethyl-8-hydroxy-5-deazariboflavin + 5'-deoxyadenosine + L-methionine + NH4(+) + H(+). It participates in cofactor biosynthesis; coenzyme F0 biosynthesis. In terms of biological role, catalyzes the radical-mediated synthesis of 7,8-didemethyl-8-hydroxy-5-deazariboflavin from 5-amino-5-(4-hydroxybenzyl)-6-(D-ribitylimino)-5,6-dihydrouracil. This Methanobrevibacter smithii (strain ATCC 35061 / DSM 861 / OCM 144 / PS) protein is 7,8-didemethyl-8-hydroxy-5-deazariboflavin synthase.